A 324-amino-acid polypeptide reads, in one-letter code: NADH-ubiquinone oxidoreductase chain 1 (324 aa).

8 helical membrane passes run 9–29 (LINP…LTLV), 75–95 (ILFL…WAPM), 106–126 (LGIL…LGSG), 146–166 (ISYE…SGGY), 178–198 (TWLL…TLAE), 212–232 (ELVS…FFLA), 259–279 (ELMT…FLWM), and 299–319 (FLPI…ALAG).

This sequence belongs to the complex I subunit 1 family. Core subunit of respiratory chain NADH dehydrogenase (Complex I) which is composed of 45 different subunits.

It localises to the mitochondrion inner membrane. It catalyses the reaction a ubiquinone + NADH + 5 H(+)(in) = a ubiquinol + NAD(+) + 4 H(+)(out). In terms of biological role, core subunit of the mitochondrial membrane respiratory chain NADH dehydrogenase (Complex I) which catalyzes electron transfer from NADH through the respiratory chain, using ubiquinone as an electron acceptor. Essential for the catalytic activity and assembly of complex I. The protein is NADH-ubiquinone oxidoreductase chain 1 (mt-nd1) of Danio rerio (Zebrafish).